A 2488-amino-acid chain; its full sequence is Neuron navigator 2 (2488 aa).

The Calponin-homology (CH) domain maps to 85–192 (GFDTQIYTDW…LFFSLSRYKQ (108 aa)). 3 stretches are compositionally biased toward low complexity: residues 194–204 (QQQPQKQHLSS), 221–247 (QAGT…PHQQ), and 255–267 (QSSA…SQSK). Disordered stretches follow at residues 194–675 (QQQP…GSNT) and 706–727 (TEGN…SHFT). Residues 299 to 315 (GGSTTANNRRSQSFNNY) show a composition bias toward polar residues. A compositionally biased stretch (low complexity) spans 356 to 369 (SGSSSTPTNCSTSS). Polar residues predominate over residues 384-396 (KSLSVKHSATVSM). The segment covering 401–410 (PPGPEAPRPT) has biased composition (pro residues). Polar residues predominate over residues 492–506 (RTFSRALTNKKSSLK). The stretch at 498-531 (LTNKKSSLKGNEKEKEKQQREKDKEKSKDLAKRA) forms a coiled coil. The segment covering 507–547 (GNEKEKEKQQREKDKEKSKDLAKRASVTERLDLKEEPKEDP) has biased composition (basic and acidic residues). Residues 592–606 (MKSMPGKSPSAPAPS) are compositionally biased toward low complexity. The segment covering 615-626 (GKLSSGLPQQKP) has biased composition (polar residues). Low complexity-rich tracts occupy residues 633–642 (SSSSSSLASS) and 657–675 (SSQT…GSNT). Residues 706 to 719 (TEGNVTAESSSTGV) show a composition bias toward polar residues. Residues 743-771 (EARRLRTVKNIADLRQNLEETMSSLRGTQ) adopt a coiled-coil conformation. 9 disordered regions span residues 804 to 824 (LSWR…PSMG), 939 to 1151 (LGLG…QSGS), 1177 to 1200 (KSSA…NQDD), 1213 to 1283 (YRSL…SDNE), 1295 to 1338 (PAAQ…PIAT), 1355 to 1412 (MTQQ…TNAS), 1440 to 1460 (SLSS…ASSK), 1473 to 1560 (VKTT…VTSP), and 1591 to 1629 (SLSN…SFRD). The segment covering 939-985 (LGLGDADSWDDSSSVSSGISDTIDNLSTDDINTSSSISSYANTPASS) has biased composition (low complexity). Over residues 1091-1102 (KTDDAKVSEKGR) the composition is skewed to basic and acidic residues. A compositionally biased stretch (polar residues) spans 1130 to 1142 (PSSSRTPTANANS). Positions 1220–1245 (SKSNSRNGAGNRSSTSSIDSNISSKS) are enriched in low complexity. The segment covering 1299–1309 (PVSSPAQTSLQ) has biased composition (polar residues). 2 stretches are compositionally biased toward low complexity: residues 1363–1380 (SPSG…PLYS) and 1388–1404 (SPLA…PSNS). Over residues 1440-1456 (SLSSGGVPSHNSSTGLI) the composition is skewed to polar residues. Residues 1477–1489 (LSESPLSSPAASP) show a composition bias toward low complexity. Residues S1480, S1484, and S1488 each carry the phosphoserine modification. Composition is skewed to basic and acidic residues over residues 1498-1510 (RKQD…DRNT) and 1526-1535 (TQEDAKEWLR). A compositionally biased stretch (low complexity) spans 1549–1560 (SPFSSGSSVTSP). Residues 1686 to 1773 (EEKCQSEIRK…AAAQAAINGV (88 aa)) are a coiled coil. Disordered regions lie at residues 1790–1887 (ADLR…LRNS) and 1951–1985 (AEND…MGLS). Composition is skewed to polar residues over residues 1800 to 1820 (SDSV…SNIE), 1875 to 1887 (NGST…LRNS), and 1959 to 1985 (ESQG…MGLS). A coiled-coil region spans residues 1897–1964 (MDSEAETVMQ…RLKSESQGSG (68 aa)). Phosphoserine is present on S1977. Residue 2157-2164 (GPSGTGKT) coordinates ATP. The interval 2423-2488 (DGYSMPREGS…ILDSSLESTL (66 aa)) is disordered. Residues 2460–2473 (YSSPQSYDSDSNSN) show a composition bias toward low complexity.

It belongs to the Nav/unc-53 family. In terms of tissue distribution, highly expressed in the brain, kidney and liver. Also expressed in the thyroid, mammary gland, spinal cord, heart, placenta and lung. Abundantly expressed in colon cancers.

The protein resides in the nucleus. It catalyses the reaction ATP + H2O = ADP + phosphate + H(+). Its function is as follows. Possesses 3' to 5' helicase activity and exonuclease activity. Involved in neuronal development, specifically in the development of different sensory organs. The protein is Neuron navigator 2 (NAV2) of Homo sapiens (Human).